Here is a 198-residue protein sequence, read N- to C-terminus: Large ribosomal subunit protein bL12m (198 aa).

Residues 1-36 (MLPSATSLLRGPCLGLRAAALRLVRQQVPHVCAVRL) constitute a mitochondrion transit peptide. Residues 106-115 (GAAPAPTAPE) show a composition bias toward low complexity. The segment at 106–126 (GAAPAPTAPEAAEEDVPKQKE) is disordered. N6-acetyllysine occurs at positions 125, 138, 142, and 144. K150 is subject to N6-acetyllysine; alternate. Residue K150 is modified to N6-succinyllysine; alternate. K150 is covalently cross-linked (Glycyl lysine isopeptide (Lys-Gly) (interchain with G-Cter in ubiquitin)). The residue at position 162 (K162) is an N6-succinyllysine. An N6-acetyllysine mark is found at K163 and K173. Residue K178 is modified to N6-acetyllysine; alternate. An N6-succinyllysine; alternate modification is found at K178. K185 carries the N6-acetyllysine modification.

The protein belongs to the bacterial ribosomal protein bL12 family. Component of the mitochondrial ribosome large subunit (39S) which comprises a 16S rRNA and about 50 distinct proteins. Interacts with NOA1. In terms of processing, two mature forms are produced by differential two-step proteolytic cleavage. Cleaved by the mitochondrial processing protease to produce the long mature form and subsequently by the mitochondrial intermediate protease to produce the short mature form. In the presence of CUL3, undergoes 'Lys-63'-linked ubiquitination at Lys-150 which results in proteasomal degradation.

The protein resides in the mitochondrion matrix. In terms of biological role, as a component of the mitochondrial large ribosomal subunit, plays a role in mitochondrial translation. When present in mitochondria as a free protein not associated with the ribosome, associates with mitochondrial RNA polymerase POLRMT to activate transcription. Required for POLRMT stability. The protein is Large ribosomal subunit protein bL12m (MRPL12) of Bos taurus (Bovine).